Reading from the N-terminus, the 1232-residue chain is DNA topoisomerase 2 (1232 aa).

Residues Asn-65, Asn-94, 122–124, 135–142, and 352–354 contribute to the ATP site; these read SSN, GRHGYGAK, and QNK. A Toprim domain is found at 432–546; it reads RTLIVTEGDS…SLLNRNPGFI (115 aa). Mg(2+) is bound by residues Glu-438, Asp-515, and Asp-517. In terms of domain architecture, Topo IIA-type catalytic spans 681-1097; that stretch reads LAHAVDGLKP…APVQMWLDEL (417 aa). The active-site O-(5'-phospho-DNA)-tyrosine intermediate is Tyr-771. The segment at 952–961 is interaction with DNA; it reads SLTQRIYING. The interval 1161–1184 is disordered; that stretch reads YVPPPPSKRPHVGQSVGGGGGGGS. The span at 1175–1184 shows a compositional bias: gly residues; it reads SVGGGGGGGS.

The protein belongs to the type II topoisomerase family. In terms of assembly, homodimer. It depends on Mg(2+) as a cofactor. Mn(2+) is required as a cofactor. The cofactor is Ca(2+).

Its subcellular location is the nucleus. The catalysed reaction is ATP-dependent breakage, passage and rejoining of double-stranded DNA.. In terms of biological role, control of topological states of DNA by transient breakage and subsequent rejoining of DNA strands. Topoisomerase II makes double-strand breaks. The chain is DNA topoisomerase 2 (TOP2) from Trypanosoma cruzi.